The chain runs to 116 residues: Probable early E4 11 kDa protein (116 aa).

The sequence is that of Probable early E4 11 kDa protein from Human adenovirus A serotype 12 (HAdV-12).